Consider the following 461-residue polypeptide: Propanal dehydrogenase (CoA-propanoylating) (461 aa).

The targets protein to the BMC stretch occupies residues 1-18 (MNTSELETLIRNILSEQL).

Belongs to the EutE/PduP family. As to quaternary structure, interacts with PduK, probably with its BMC-containing N-terminus. Interacts with shell proteins PduA and PduJ, interacts with PduQ.

Its subcellular location is the bacterial microcompartment. It catalyses the reaction propanal + NAD(+) + CoA = propanoyl-CoA + NADH + H(+). It participates in polyol metabolism; 1,2-propanediol degradation. Its function is as follows. A CoA-acylating aldehyde dehydrogenase required for optimal 1,2-propanediol (1,2-PD) degradation. Optimizes growth in the bacterial microcompartment (BMC) dedicated to 1,2-PD degradation by minimizing propionaldehyde toxicity. NAD(+) and NADH are regenerated internally within the Pdu BMC by the PduP and PduQ enzymes, which reduce NAD(+) and oxidize NADH respectively, although there must also be cofactor transport across the BMC. Directly targeted to the BMC. Expression of a cosmid containing the full 21-gene pdu operon in E.coli allows E.coli to grow on 1,2-propanediol (1,2-PD) with the appearance of bacterial microcompartments (BMC) in its cytoplasm. In terms of biological role, the 1,2-PD-specific bacterial microcompartment (BMC) concentrates low levels of 1,2-PD catabolic enzymes, concentrates volatile reaction intermediates thus enhancing pathway flux and keeps the level of toxic, mutagenic propionaldehyde low. The polypeptide is Propanal dehydrogenase (CoA-propanoylating) (Citrobacter freundii).